A 269-amino-acid chain; its full sequence is MISLKNFGLLFWKRFSENKLNQVAGALTYSTMLAIVPLVMVIFSIFSAFPVFNEVTGELKEMIFTNFAPSASDMVGEYIDQFVSNSKKMSAVGIVSLIAVALMLINNIDRTLNSIWHNSQSRSPLSSFAIYWMILTLGPLIIGVSIGISSYIKIMFEQSEHLSLGLKLLSFVPFLFTWFIFTLIYTVVPNKKVKIKHSAYGAFLAAIFFTLGKQAFTWYVVTFPSYQLIYGAMATLPIMLLWIQISWLVVLVGAQLASTLDEIGEQIEQ.

A run of 6 helical transmembrane segments spans residues 32-52 (MLAI…FPVF), 89-109 (MSAV…NNID), 128-148 (FAIY…SIGI), 168-188 (LLSF…YTVV), 203-223 (FLAA…VVTF), and 232-252 (AMAT…VVLV).

The protein belongs to the UPF0761 family.

The protein localises to the cell inner membrane. This chain is UPF0761 membrane protein NTHI0384, found in Haemophilus influenzae (strain 86-028NP).